A 76-amino-acid polypeptide reads, in one-letter code: Conotoxin Vc6.3 (76 aa).

A signal peptide spans 1 to 22; that stretch reads MKLTCVMIVAVLFLTANTFATA. A propeptide spanning residues 23 to 50 is cleaved from the precursor; sequence DDPRNGLRDLFSIAHHEMKNPEASKLNE. Cystine bridges form between cysteine 52-cysteine 66, cysteine 59-cysteine 70, and cysteine 67-cysteine 75.

Belongs to the conotoxin O1 superfamily. As to expression, expressed by the venom duct.

The protein localises to the secreted. The sequence is that of Conotoxin Vc6.3 from Conus victoriae (Queen Victoria cone).